The following is a 121-amino-acid chain: Ribonuclease P protein component (121 aa).

Belongs to the RnpA family. In terms of assembly, consists of a catalytic RNA component (M1 or rnpB) and a protein subunit.

The enzyme catalyses Endonucleolytic cleavage of RNA, removing 5'-extranucleotides from tRNA precursor.. RNaseP catalyzes the removal of the 5'-leader sequence from pre-tRNA to produce the mature 5'-terminus. It can also cleave other RNA substrates such as 4.5S RNA. The protein component plays an auxiliary but essential role in vivo by binding to the 5'-leader sequence and broadening the substrate specificity of the ribozyme. The protein is Ribonuclease P protein component of Chromobacterium violaceum (strain ATCC 12472 / DSM 30191 / JCM 1249 / CCUG 213 / NBRC 12614 / NCIMB 9131 / NCTC 9757 / MK).